The sequence spans 375 residues: Lipid droplet hydrolase 1 (375 aa).

One can recognise an AB hydrolase-1 domain in the interval 88–358 (VFVFVPGLAG…CSHNLCFDRP (271 aa)). The Charge relay system role is filled by Ser-177. The Microbody targeting signal signature appears at 373-375 (SKL).

It belongs to the AB hydrolase superfamily. Lipase family.

Its subcellular location is the lipid droplet. It catalyses the reaction a triacylglycerol + H2O = a diacylglycerol + a fatty acid + H(+). Its function is as follows. Serine hydrolase required for the maintenance of steady state level of non-polar and polar lipids of lipid droplets and thus plays a role in maintaining the lipids homeostasis. Exhibits both esterase and triacylglycerol lipase activity. In Saccharomyces cerevisiae (strain ATCC 204508 / S288c) (Baker's yeast), this protein is Lipid droplet hydrolase 1.